The chain runs to 459 residues: Glutamyl-tRNA reductase (459 aa).

Substrate is bound by residues 47–50 (TCNR), Ser-140, 145–147 (EPQ), and Gln-151. Residue Cys-48 is the Nucleophile of the active site. 220 to 225 (AAGEMN) contributes to the NADP(+) binding site.

Belongs to the glutamyl-tRNA reductase family. Homodimer.

The enzyme catalyses (S)-4-amino-5-oxopentanoate + tRNA(Glu) + NADP(+) = L-glutamyl-tRNA(Glu) + NADPH + H(+). Its pathway is porphyrin-containing compound metabolism; protoporphyrin-IX biosynthesis; 5-aminolevulinate from L-glutamyl-tRNA(Glu): step 1/2. In terms of biological role, catalyzes the NADPH-dependent reduction of glutamyl-tRNA(Glu) to glutamate 1-semialdehyde (GSA). This Psychrobacter arcticus (strain DSM 17307 / VKM B-2377 / 273-4) protein is Glutamyl-tRNA reductase.